A 95-amino-acid chain; its full sequence is Large ribosomal subunit protein bL28 (95 aa).

Belongs to the bacterial ribosomal protein bL28 family.

This Zymomonas mobilis subsp. mobilis (strain ATCC 31821 / ZM4 / CP4) protein is Large ribosomal subunit protein bL28.